The primary structure comprises 447 residues: N-succinylarginine dihydrolase (447 aa).

Substrate contacts are provided by residues alanine 19 to serine 28, asparagine 110, and histidine 137 to arginine 138. Glutamate 174 is a catalytic residue. Arginine 212 provides a ligand contact to substrate. Histidine 248 is an active-site residue. Residues aspartate 250 and asparagine 359 each coordinate substrate. Cysteine 365 serves as the catalytic Nucleophile.

Belongs to the succinylarginine dihydrolase family. Homodimer.

The enzyme catalyses N(2)-succinyl-L-arginine + 2 H2O + 2 H(+) = N(2)-succinyl-L-ornithine + 2 NH4(+) + CO2. The protein operates within amino-acid degradation; L-arginine degradation via AST pathway; L-glutamate and succinate from L-arginine: step 2/5. Functionally, catalyzes the hydrolysis of N(2)-succinylarginine into N(2)-succinylornithine, ammonia and CO(2). The sequence is that of N-succinylarginine dihydrolase from Escherichia coli (strain SE11).